Here is a 49-residue protein sequence, read N- to C-terminus: Large ribosomal subunit protein bL33A (49 aa).

Belongs to the bacterial ribosomal protein bL33 family.

In Geobacillus thermodenitrificans (strain NG80-2), this protein is Large ribosomal subunit protein bL33A.